Here is a 341-residue protein sequence, read N- to C-terminus: MSLMCYNKGCGQRFDLEKNSDDACTYHPGVPVFHDALKGWSCCKRRTTDFSDFLSIAGCTKGPHNQEKPAEPVKPEVKSSLDKNDVKPKYDEFIIQAPKPLESIQRPSPDEPFSILQSKISPSLKQALEKLKLTEENAHEIKEEDSDEIKIGTSCKNGGCCKTFAGQASDDETCLYHAGVPIFHEGMKYWSCCKRKTSDFNTFLSQEGCTRGKHQWKKKDAGKKVVPCRFDWHQTGSQVIISIYAKNSVPELSLVEGNSTVLKIHIIFEGEKEFEKQISLWGVIDPSKSLVNMMATKIEIVLKKAEPMSWARLDLPPVAPPKEKEKEKDVDSEDECDDDED.

Residues C5, C10, C24, H27, C42, C43, C59, H64, C155, C160, C174, H177, C192, C193, C209, and H214 each contribute to the Zn(2+) site. CHORD domains lie at 5–64 (CYNK…KGPH) and 155–214 (CKNG…RGKH). Positions 61 to 81 (KGPHNQEKPAEPVKPEVKSSL) are disordered. Basic and acidic residues predominate over residues 64-81 (HNQEKPAEPVKPEVKSSL). Residues 225-314 (VVPCRFDWHQ…AEPMSWARLD (90 aa)) enclose the CS domain. The disordered stretch occupies residues 313–341 (LDLPPVAPPKEKEKEKDVDSEDECDDDED). Acidic residues predominate over residues 330-341 (VDSEDECDDDED).

In terms of biological role, regulates centrosome duplication. This Danio rerio (Zebrafish) protein is Cysteine and histidine-rich domain-containing protein 1 (chordc1).